The sequence spans 58 residues: Small ribosomal subunit protein bS21 (58 aa).

Residues 34–58 (KREHYESPSVRRKKKSEAARRRKRR) are disordered. Residues 43-58 (VRRKKKSEAARRRKRR) are compositionally biased toward basic residues.

The protein belongs to the bacterial ribosomal protein bS21 family.

The protein is Small ribosomal subunit protein bS21 of Caldicellulosiruptor bescii (strain ATCC BAA-1888 / DSM 6725 / KCTC 15123 / Z-1320) (Anaerocellum thermophilum).